A 432-amino-acid polypeptide reads, in one-letter code: Homogentisate 1,2-dioxygenase (432 aa).

The Proton acceptor role is filled by H286. Fe cation contacts are provided by H329 and E335. Residues Y344 and H365 each coordinate homogentisate. H365 serves as a coordination point for Fe cation.

This sequence belongs to the homogentisate dioxygenase family. As to quaternary structure, hexamer; dimer of trimers. The cofactor is Fe cation.

The enzyme catalyses homogentisate + O2 = 4-maleylacetoacetate + H(+). The protein operates within amino-acid degradation; L-phenylalanine degradation; acetoacetate and fumarate from L-phenylalanine: step 4/6. Functionally, involved in the catabolism of homogentisate (2,5-dihydroxyphenylacetate or 2,5-OH-PhAc), a central intermediate in the degradation of phenylalanine and tyrosine. Catalyzes the oxidative ring cleavage of the aromatic ring of homogentisate to yield maleylacetoacetate. The sequence is that of Homogentisate 1,2-dioxygenase from Bordetella bronchiseptica (strain ATCC BAA-588 / NCTC 13252 / RB50) (Alcaligenes bronchisepticus).